The primary structure comprises 405 residues: Phosphoglycerate kinase (405 aa).

Residues 24–26, R40, 63–66, R122, and R162 contribute to the substrate site; these read DFN and HLGR. Residues K212, E331, and 361-364 each bind ATP; that span reads GGDS.

The protein belongs to the phosphoglycerate kinase family. Monomer.

The protein resides in the cytoplasm. It catalyses the reaction (2R)-3-phosphoglycerate + ATP = (2R)-3-phospho-glyceroyl phosphate + ADP. The protein operates within carbohydrate degradation; glycolysis; pyruvate from D-glyceraldehyde 3-phosphate: step 2/5. The polypeptide is Phosphoglycerate kinase (Corynebacterium efficiens (strain DSM 44549 / YS-314 / AJ 12310 / JCM 11189 / NBRC 100395)).